A 72-amino-acid chain; its full sequence is Seed trypsin/chymotrypsin inhibitor IVB (72 aa).

7 disulfides stabilise this stretch: Cys8–Cys61, Cys9–Cys24, Cys12–Cys57, Cys14–Cys22, Cys31–Cys38, Cys35–Cys50, and Cys40–Cys48.

The protein belongs to the Bowman-Birk serine protease inhibitor family. In terms of tissue distribution, seed.

In terms of biological role, inhibitor of trypsin and of chymotrypsin. May function as a natural phytochemical defense against predators. This Pisum sativum (Garden pea) protein is Seed trypsin/chymotrypsin inhibitor IVB.